The chain runs to 122 residues: Small ribosomal subunit protein uS12 (122 aa).

Asp89 carries the post-translational modification 3-methylthioaspartic acid.

The protein belongs to the universal ribosomal protein uS12 family. In terms of assembly, part of the 30S ribosomal subunit. Contacts proteins S8 and S17. May interact with IF1 in the 30S initiation complex.

Functionally, with S4 and S5 plays an important role in translational accuracy. In terms of biological role, interacts with and stabilizes bases of the 16S rRNA that are involved in tRNA selection in the A site and with the mRNA backbone. Located at the interface of the 30S and 50S subunits, it traverses the body of the 30S subunit contacting proteins on the other side and probably holding the rRNA structure together. The combined cluster of proteins S8, S12 and S17 appears to hold together the shoulder and platform of the 30S subunit. This is Small ribosomal subunit protein uS12 from Neorickettsia sennetsu (strain ATCC VR-367 / Miyayama) (Ehrlichia sennetsu).